Reading from the N-terminus, the 612-residue chain is Probable translation initiation factor IF-2 (612 aa).

The tr-type G domain maps to 11-229; the sequence is LRQPIVVVLG…VLAGLTQRYL (219 aa). The G1 stretch occupies residues 20-27; the sequence is GHVDHGKT. Residue 20-27 coordinates GTP; that stretch reads GHVDHGKT. The segment at 45-49 is G2; the sequence is LITQH. Residues 84–87 form a G3 region; it reads DTPG. Residues 84–88 and 138–141 each bind GTP; these read DTPGH and NKID. The interval 138–141 is G4; sequence NKID. The segment at 207 to 209 is G5; that stretch reads SAK.

Belongs to the TRAFAC class translation factor GTPase superfamily. Classic translation factor GTPase family. IF-2 subfamily.

In terms of biological role, function in general translation initiation by promoting the binding of the formylmethionine-tRNA to ribosomes. Seems to function along with eIF-2. The protein is Probable translation initiation factor IF-2 of Hyperthermus butylicus (strain DSM 5456 / JCM 9403 / PLM1-5).